Consider the following 364-residue polypeptide: Phosphate acyltransferase (364 aa).

Positions 343 to 364 (IRTSGRSGGKSKSSAAREDGAA) are disordered.

Belongs to the PlsX family. In terms of assembly, homodimer. Probably interacts with PlsY.

The protein resides in the cytoplasm. The catalysed reaction is a fatty acyl-[ACP] + phosphate = an acyl phosphate + holo-[ACP]. The protein operates within lipid metabolism; phospholipid metabolism. Its function is as follows. Catalyzes the reversible formation of acyl-phosphate (acyl-PO(4)) from acyl-[acyl-carrier-protein] (acyl-ACP). This enzyme utilizes acyl-ACP as fatty acyl donor, but not acyl-CoA. The sequence is that of Phosphate acyltransferase from Novosphingobium aromaticivorans (strain ATCC 700278 / DSM 12444 / CCUG 56034 / CIP 105152 / NBRC 16084 / F199).